The primary structure comprises 332 residues: Ribosomal RNA small subunit methyltransferase H (332 aa).

Residues 36 to 38, Asp61, Phe88, Asp114, and Gln121 contribute to the S-adenosyl-L-methionine site; that span reads GGH.

This sequence belongs to the methyltransferase superfamily. RsmH family.

The protein resides in the cytoplasm. The catalysed reaction is cytidine(1402) in 16S rRNA + S-adenosyl-L-methionine = N(4)-methylcytidine(1402) in 16S rRNA + S-adenosyl-L-homocysteine + H(+). Specifically methylates the N4 position of cytidine in position 1402 (C1402) of 16S rRNA. This is Ribosomal RNA small subunit methyltransferase H from Pelodictyon phaeoclathratiforme (strain DSM 5477 / BU-1).